Reading from the N-terminus, the 87-residue chain is Probable Fe(2+)-trafficking protein (87 aa).

Belongs to the Fe(2+)-trafficking protein family.

Its function is as follows. Could be a mediator in iron transactions between iron acquisition and iron-requiring processes, such as synthesis and/or repair of Fe-S clusters in biosynthetic enzymes. The chain is Probable Fe(2+)-trafficking protein from Francisella philomiragia subsp. philomiragia (strain ATCC 25017 / CCUG 19701 / FSC 153 / O#319-036).